Here is a 599-residue protein sequence, read N- to C-terminus: Elongation factor 4 (599 aa).

Residues 4–186 form the tr-type G domain; that stretch reads KFIRNFSIIA…AIIKHVPPPL (183 aa). Residues 16–21 and 133–136 each bind GTP; these read DHGKST and NKID.

The protein belongs to the TRAFAC class translation factor GTPase superfamily. Classic translation factor GTPase family. LepA subfamily.

It is found in the cell membrane. It catalyses the reaction GTP + H2O = GDP + phosphate + H(+). In terms of biological role, required for accurate and efficient protein synthesis under certain stress conditions. May act as a fidelity factor of the translation reaction, by catalyzing a one-codon backward translocation of tRNAs on improperly translocated ribosomes. Back-translocation proceeds from a post-translocation (POST) complex to a pre-translocation (PRE) complex, thus giving elongation factor G a second chance to translocate the tRNAs correctly. Binds to ribosomes in a GTP-dependent manner. This chain is Elongation factor 4, found in Ureaplasma urealyticum serovar 10 (strain ATCC 33699 / Western).